Here is a 188-residue protein sequence, read N- to C-terminus: Elongation factor P (188 aa).

This sequence belongs to the elongation factor P family.

The protein resides in the cytoplasm. Its pathway is protein biosynthesis; polypeptide chain elongation. Functionally, involved in peptide bond synthesis. Stimulates efficient translation and peptide-bond synthesis on native or reconstituted 70S ribosomes in vitro. Probably functions indirectly by altering the affinity of the ribosome for aminoacyl-tRNA, thus increasing their reactivity as acceptors for peptidyl transferase. This Gluconacetobacter diazotrophicus (strain ATCC 49037 / DSM 5601 / CCUG 37298 / CIP 103539 / LMG 7603 / PAl5) protein is Elongation factor P.